Reading from the N-terminus, the 976-residue chain is Dolichyl-phosphooligosaccharide-protein glycotransferase 1 (976 aa).

The Cytoplasmic segment spans residues 1–21 (MVKSKVKKVEKGKEGEEKRST). The helical transmembrane segment at 22 to 42 (YVLLKKVLIPILVFGFAIYAF) threads the bilayer. The Extracellular segment spans residues 43 to 112 (YLRHLTAGKY…KVVSLFGYNE (70 aa)). Residues 55–57 (DPD) carry the DXD motif 1 motif. Asp57 is a binding site for Mn(2+). A helical transmembrane segment spans residues 113 to 133 (LQAFLLWPPFVGFLGVIAVYL). At 134-135 (LG) the chain is on the cytoplasmic side. A helical membrane pass occupies residues 136 to 156 (RKVLNEWTGLWGAVVLTVSTA). The Extracellular segment spans residues 157 to 165 (NFSRTFSGN). A helical membrane pass occupies residues 166 to 186 (ARGDGPFMALFIFASVAMLYY). Mn(2+) is bound by residues Arg167 and Asp169. A DXD motif 2 motif is present at residues 167–169 (RGD). Over 187–193 (LKESNKT) the chain is Cytoplasmic. A helical membrane pass occupies residues 194 to 214 (RKIIYGTLFVLLTVISLGAWN). Position 215 (Gly215) is a topological domain, extracellular. The helical transmembrane segment at 216–236 (SPFGLMVLLGFASLQTIILFI) threads the bilayer. At 237–247 (FGKLEELKKFV) the chain is on the cytoplasmic side. A helical transmembrane segment spans residues 248 to 268 (KEFYPAYLAILAFGYALTFPG). A topological domain (extracellular) is located at residue Ile269. The chain crosses the membrane as a helical span at residues 270 to 290 (VKIGGFIRFAFEVFLGLIFLL). Residues 291–306 (VIMLYGGRYLNYSDKK) are Cytoplasmic-facing. A helical membrane pass occupies residues 307-327 (HRFLVVTIIVLLGFGGAYAYV). Residues 328–360 (GPKLFRLMGGAYQSTQVYETVQELAKTTIGDVK) are Extracellular-facing. Positions 347 to 350 (TVQE) match the TIXE motif motif. The chain crosses the membrane as a helical span at residues 361-381 (AYYGVESGNGLIFFLSIPGLL). Topologically, residues 382 to 396 (ILLTKYLYDLFKKAK) are cytoplasmic. Residues 397–417 (SDNETLFALVFYTMSLYLLYL) traverse the membrane as a helical segment. A topological domain (extracellular) is located at residue Ala418. The chain crosses the membrane as a helical span at residues 419–439 (VRFLFLASYAVALFFGIFIGF). Arg420 provides a ligand contact to a glycophospholipid. The Cytoplasmic segment spans residues 440-453 (SMDVIEKMKENIGI). The helical transmembrane segment at 454-474 (KAALGIVLSLMILVIPFVHAP) threads the bilayer. The Extracellular portion of the chain corresponds to 475 to 976 (VLARSARALK…SASAPHHSSE (502 aa)). The segment at 513 to 515 (WWD) is interacts with target acceptor peptide in protein substrate. The WWDYG motif signature appears at 513 to 517 (WWDYG). Tyr518 serves as a coordination point for a glycophospholipid. The DK motif motif lies at 573-580 (DWAKFNAI).

Belongs to the STT3 family. Requires Mn(2+) as cofactor. Mg(2+) serves as cofactor.

The protein resides in the cell membrane. It carries out the reaction an archaeal dolichyl phosphooligosaccharide + [protein]-L-asparagine = an archaeal dolichyl phosphate + a glycoprotein with the oligosaccharide chain attached by N-beta-D-glycosyl linkage to a protein L-asparagine.. The protein operates within protein modification; protein glycosylation. Oligosaccharyl transferase (OST) that catalyzes the initial transfer of a defined glycan (ManNAcXyl(2)GlcAMan(2)GalNAc in Pyrococcus) from the lipid carrier dolichol-monophosphate to an asparagine residue within an Asn-X-Ser/Thr consensus motif in nascent polypeptide chains, the first step in protein N-glycosylation. This chain is Dolichyl-phosphooligosaccharide-protein glycotransferase 1 (aglB1), found in Pyrococcus horikoshii (strain ATCC 700860 / DSM 12428 / JCM 9974 / NBRC 100139 / OT-3).